The sequence spans 286 residues: AB hydrolase superfamily protein YfhM (286 aa).

An AB hydrolase-1 domain is found at 27–272; sequence PLIVLLHGFP…ASHWINHEKP (246 aa). Aspartate 103 serves as the catalytic Nucleophile. Catalysis depends on tyrosine 210, which acts as the Proton donor. Catalysis depends on histidine 265, which acts as the Proton acceptor.

It belongs to the AB hydrolase superfamily. Epoxide hydrolase family.

The polypeptide is AB hydrolase superfamily protein YfhM (yfhM) (Bacillus subtilis (strain 168)).